The primary structure comprises 396 residues: Probable protein phosphatase 2C 25 (396 aa).

The segment at 32–98 is disordered; that stretch reads ESLSLTLSHR…SPPGGVLKRK (67 aa). Over residues 44-61 the composition is skewed to low complexity; sequence QTSSPSSPSTTVSSPKSP. The 254-residue stretch at 139–392 folds into the PPM-type phosphatase domain; it reads GYSVYCKRGR…DDISVMLIPL (254 aa). Residues D175, G176, D338, and D383 each coordinate Mn(2+).

The protein belongs to the PP2C family. As to quaternary structure, interacts with MPK4 and MPK6. Mg(2+) serves as cofactor. The cofactor is Mn(2+).

It localises to the cytoplasm. The protein localises to the nucleus. It catalyses the reaction O-phospho-L-seryl-[protein] + H2O = L-seryl-[protein] + phosphate. The enzyme catalyses O-phospho-L-threonyl-[protein] + H2O = L-threonyl-[protein] + phosphate. Functionally, protein phosphatase that negatively regulates defense respones. Inactivates MPK4 and MPK6 MAP kinases involved in stress and defense signaling. The sequence is that of Probable protein phosphatase 2C 25 from Arabidopsis thaliana (Mouse-ear cress).